A 254-amino-acid polypeptide reads, in one-letter code: Triosephosphate isomerase (254 aa).

12–14 (NWK) contacts substrate. The Electrophile role is filled by His-99. The active-site Proton acceptor is Glu-169. Substrate contacts are provided by residues Gly-175, Ser-214, and 235–236 (GG).

It belongs to the triosephosphate isomerase family. In terms of assembly, homodimer.

The protein resides in the cytoplasm. It carries out the reaction D-glyceraldehyde 3-phosphate = dihydroxyacetone phosphate. The protein operates within carbohydrate biosynthesis; gluconeogenesis. It functions in the pathway carbohydrate degradation; glycolysis; D-glyceraldehyde 3-phosphate from glycerone phosphate: step 1/1. Its function is as follows. Involved in the gluconeogenesis. Catalyzes stereospecifically the conversion of dihydroxyacetone phosphate (DHAP) to D-glyceraldehyde-3-phosphate (G3P). The chain is Triosephosphate isomerase from Brucella abortus biovar 1 (strain 9-941).